A 215-amino-acid polypeptide reads, in one-letter code: Putative zinc finger protein ORF121 (215 aa).

Residues 53–105 (CVICMEPTYTKKTLAECDIEGGALRVTTMPCPTHYICDNCIRQEMEDKCPICR) form an RING-type; degenerate zinc finger.

In Magallana gigas (Pacific oyster), this protein is Putative zinc finger protein ORF121.